Reading from the N-terminus, the 899-residue chain is Valine--tRNA ligase (899 aa).

Positions 60-70 (PNVTGVLHMGH) match the 'HIGH' region motif. Positions 539–543 (KMSKS) match the 'KMSKS' region motif. K542 serves as a coordination point for ATP. The stretch at 827–898 (AGLIDLDEEQ…KQGLEKLAAL (72 aa)) forms a coiled coil.

The protein belongs to the class-I aminoacyl-tRNA synthetase family. ValS type 1 subfamily. Monomer.

The protein localises to the cytoplasm. It carries out the reaction tRNA(Val) + L-valine + ATP = L-valyl-tRNA(Val) + AMP + diphosphate. Functionally, catalyzes the attachment of valine to tRNA(Val). As ValRS can inadvertently accommodate and process structurally similar amino acids such as threonine, to avoid such errors, it has a 'posttransfer' editing activity that hydrolyzes mischarged Thr-tRNA(Val) in a tRNA-dependent manner. This is Valine--tRNA ligase from Syntrophotalea carbinolica (strain DSM 2380 / NBRC 103641 / GraBd1) (Pelobacter carbinolicus).